The primary structure comprises 502 residues: MKKGPVLLAVLDGYGFSKDTKGNAILNAKTPFMDNLVKEYDHCYIEASGEYVGLPDGQIGNSEVGHLTIGAGRIVYTGLSLINQDIKTKKFDSNKTLLEAINHAKKNNSNIHIMGLLSPGGVHSNEQHIFEMIRIVSENGLKPVIHVFGDGRDVAPQSIISSLERLNDVLKKYPGTIATISGRFYSMDRDKRWERTKQAYDNLLGISNNYFDNPIDYVNKQYSENIFDEFLVPARINDSNVVIKDNDAVIHANFRPDRARQISHLFCGSTVYEEKNDHPLKNLYYAIMMTYEGITPTSILFPTVVVKNTFGEVVANSGLTQLRIAETEKYAHVTFFFDGGVEVDLKNESKILVDSKKVKTYDEVPAMSAVEITDKLIENLDKFDVIVLNFANADMVGHTGKYNEAVLAIEALDSQLARIDQKIKELNGTMFITADHGNAEVMLDDDNNPVTKHTTNPVIFISNNKDVKFNKPGSLGNVAPTILDFMGLEIPADMDKKSLLKK.

Positions 12 and 62 each coordinate Mn(2+). Serine 62 acts as the Phosphoserine intermediate in catalysis. Substrate is bound by residues histidine 123, 152–153, arginine 183, arginine 189, 255–258, and lysine 329; these read RD and RPDR. Residues aspartate 394, histidine 398, aspartate 435, histidine 436, and histidine 453 each contribute to the Mn(2+) site.

The protein belongs to the BPG-independent phosphoglycerate mutase family. Monomer. Mn(2+) is required as a cofactor.

It carries out the reaction (2R)-2-phosphoglycerate = (2R)-3-phosphoglycerate. Its pathway is carbohydrate degradation; glycolysis; pyruvate from D-glyceraldehyde 3-phosphate: step 3/5. Its function is as follows. Catalyzes the interconversion of 2-phosphoglycerate and 3-phosphoglycerate. This is 2,3-bisphosphoglycerate-independent phosphoglycerate mutase from Malacoplasma penetrans (strain HF-2) (Mycoplasma penetrans).